The primary structure comprises 183 residues: Putative 3-methyladenine DNA glycosylase (183 aa).

It belongs to the DNA glycosylase MPG family.

The protein is Putative 3-methyladenine DNA glycosylase of Rickettsia rickettsii (strain Iowa).